A 359-amino-acid polypeptide reads, in one-letter code: Membrane-bound lytic murein transglycosylase C (359 aa).

Residues 1–16 (MKKVLALALIAPLLIS) form the signal peptide. A lipid anchor (N-palmitoyl cysteine) is attached at Cys-17. The S-diacylglycerol cysteine moiety is linked to residue Cys-17.

The protein belongs to the transglycosylase Slt family.

Its subcellular location is the cell outer membrane. The enzyme catalyses Exolytic cleavage of the (1-&gt;4)-beta-glycosidic linkage between N-acetylmuramic acid (MurNAc) and N-acetylglucosamine (GlcNAc) residues in peptidoglycan, from either the reducing or the non-reducing ends of the peptidoglycan chains, with concomitant formation of a 1,6-anhydrobond in the MurNAc residue.. In terms of biological role, murein-degrading enzyme. May play a role in recycling of muropeptides during cell elongation and/or cell division. The protein is Membrane-bound lytic murein transglycosylase C of Edwardsiella ictaluri (strain 93-146).